The following is a 171-amino-acid chain: 3-hydroxydecanoyl-[acyl-carrier-protein] dehydratase (171 aa).

Histidine 70 is an active-site residue.

It belongs to the thioester dehydratase family. FabA subfamily. Homodimer.

The protein resides in the cytoplasm. The catalysed reaction is a (3R)-hydroxyacyl-[ACP] = a (2E)-enoyl-[ACP] + H2O. It carries out the reaction (3R)-hydroxydecanoyl-[ACP] = (2E)-decenoyl-[ACP] + H2O. It catalyses the reaction (2E)-decenoyl-[ACP] = (3Z)-decenoyl-[ACP]. It functions in the pathway lipid metabolism; fatty acid biosynthesis. Necessary for the introduction of cis unsaturation into fatty acids. Catalyzes the dehydration of (3R)-3-hydroxydecanoyl-ACP to E-(2)-decenoyl-ACP and then its isomerization to Z-(3)-decenoyl-ACP. Can catalyze the dehydratase reaction for beta-hydroxyacyl-ACPs with saturated chain lengths up to 16:0, being most active on intermediate chain length. The protein is 3-hydroxydecanoyl-[acyl-carrier-protein] dehydratase of Pseudomonas putida (strain W619).